Here is a 254-residue protein sequence, read N- to C-terminus: 3-deoxy-manno-octulosonate cytidylyltransferase (254 aa).

Belongs to the KdsB family.

The protein resides in the cytoplasm. The enzyme catalyses 3-deoxy-alpha-D-manno-oct-2-ulosonate + CTP = CMP-3-deoxy-beta-D-manno-octulosonate + diphosphate. Its pathway is nucleotide-sugar biosynthesis; CMP-3-deoxy-D-manno-octulosonate biosynthesis; CMP-3-deoxy-D-manno-octulosonate from 3-deoxy-D-manno-octulosonate and CTP: step 1/1. The protein operates within bacterial outer membrane biogenesis; lipopolysaccharide biosynthesis. Functionally, activates KDO (a required 8-carbon sugar) for incorporation into bacterial lipopolysaccharide in Gram-negative bacteria. This is 3-deoxy-manno-octulosonate cytidylyltransferase from Chlamydia pneumoniae (Chlamydophila pneumoniae).